A 326-amino-acid chain; its full sequence is 4-hydroxythreonine-4-phosphate dehydrogenase (326 aa).

Positions 134 and 135 each coordinate substrate. Positions 164, 209, and 264 each coordinate a divalent metal cation. Residues Lys272, Asn281, and Arg290 each coordinate substrate.

The protein belongs to the PdxA family. As to quaternary structure, homodimer. Requires Zn(2+) as cofactor. Mg(2+) serves as cofactor. Co(2+) is required as a cofactor.

It is found in the cytoplasm. It carries out the reaction 4-(phosphooxy)-L-threonine + NAD(+) = 3-amino-2-oxopropyl phosphate + CO2 + NADH. Its pathway is cofactor biosynthesis; pyridoxine 5'-phosphate biosynthesis; pyridoxine 5'-phosphate from D-erythrose 4-phosphate: step 4/5. Its function is as follows. Catalyzes the NAD(P)-dependent oxidation of 4-(phosphooxy)-L-threonine (HTP) into 2-amino-3-oxo-4-(phosphooxy)butyric acid which spontaneously decarboxylates to form 3-amino-2-oxopropyl phosphate (AHAP). The polypeptide is 4-hydroxythreonine-4-phosphate dehydrogenase (Colwellia psychrerythraea (strain 34H / ATCC BAA-681) (Vibrio psychroerythus)).